An 867-amino-acid chain; its full sequence is DNA mismatch repair protein MutS (867 aa).

Residue 606-613 (GPNMSGKS) participates in ATP binding.

Belongs to the DNA mismatch repair MutS family.

Its function is as follows. This protein is involved in the repair of mismatches in DNA. It is possible that it carries out the mismatch recognition step. This protein has a weak ATPase activity. The sequence is that of DNA mismatch repair protein MutS from Oceanobacillus iheyensis (strain DSM 14371 / CIP 107618 / JCM 11309 / KCTC 3954 / HTE831).